A 553-amino-acid polypeptide reads, in one-letter code: Transcription factor GAMYB (553 aa).

Over residues 1-17 (MYRVKSESDCEMIHQEQ) the composition is skewed to basic and acidic residues. Residues 1-45 (MYRVKSESDCEMIHQEQMDSPVADDGSSGGSPHRGGGPPLKKGPW) are disordered. Residues 27–38 (SSGGSPHRGGGP) show a composition bias toward gly residues. 2 HTH myb-type domains span residues 37 to 89 (GPPL…ANHL) and 90 to 144 (RPNL…KRCQ). DNA-binding regions (H-T-H motif) lie at residues 65-89 (WNAV…ANHL) and 117-140 (WARM…NTRI). The disordered stretch occupies residues 464 to 488 (PAQSTSMGSGEQVMGPKYEPGDTSP).

Its subcellular location is the nucleus. Transcriptional activator of gibberellin-dependent alpha-amylase expression in aleurone cells. Involved in pollen and floral organs development. May bind to the 5'-TAACAAA-3' box of alpha-amylase promoter. In Oryza sativa subsp. indica (Rice), this protein is Transcription factor GAMYB (GAM1).